A 615-amino-acid polypeptide reads, in one-letter code: MPDYRSKTSTHGRNMAGARALWRATGMKDEDFKKPIIAIANSFTQFVPGHVHLKDMGQLVAREVERAGGVAKEFNTIAVDDGIAMGHDGMLYSLPSREIIADSVEYMVNAHCADAIVCISNCDKITPGMLMASLRLNIPVIFVSGGPMEAGKTKLASHGLDLVDAMVIAADSTASDEKVAEYERSACPTCGSCSGMFTANSMNCLTEALGLALPGNGSALATHSDREQLFLQAGRTIVDLCRQYYKENDDSVLPRNIANFKAFENAMTLDIAMGGSTNTILHLLAAAQEAEIDFDLRHIDRLSRKVPQLCKVAPNIQKYHMEDVHRAGGIFSILGELARGGLLHTDLPTVHSKTLAEGIAKWDITQTDDEAVHTFFKAGPAGIPTQTAFSQSTRWDSLDDDRENGCIRSVEHAYSQEGGLAVLYGNIALDGCVVKTAGVDESIHVFEGNAKIFESQDSAVRGILADEVKAGDIVIIRYEGPKGGPGMQEMLYPTSYLKSKGLGKDCALLTDGRFSGGTSGLSIGHASPEAAAGGAIGLVRDGDKVLIDIPNRSINLLIDDAEMAERRTEQDKKGWKPVESRPRKVTTALKAYALLATSADKGAVRDKALLDKLVP.

Aspartate 81 lines the Mg(2+) pocket. Cysteine 122 serves as a coordination point for [2Fe-2S] cluster. Mg(2+) is bound by residues aspartate 123 and lysine 124. Lysine 124 bears the N6-carboxylysine mark. Cysteine 193 lines the [2Fe-2S] cluster pocket. Glutamate 489 contributes to the Mg(2+) binding site. The Proton acceptor role is filled by serine 515.

The protein belongs to the IlvD/Edd family. In terms of assembly, homodimer. [2Fe-2S] cluster is required as a cofactor. It depends on Mg(2+) as a cofactor.

It carries out the reaction (2R)-2,3-dihydroxy-3-methylbutanoate = 3-methyl-2-oxobutanoate + H2O. It catalyses the reaction (2R,3R)-2,3-dihydroxy-3-methylpentanoate = (S)-3-methyl-2-oxopentanoate + H2O. The protein operates within amino-acid biosynthesis; L-isoleucine biosynthesis; L-isoleucine from 2-oxobutanoate: step 3/4. Its pathway is amino-acid biosynthesis; L-valine biosynthesis; L-valine from pyruvate: step 3/4. Functionally, functions in the biosynthesis of branched-chain amino acids. Catalyzes the dehydration of (2R,3R)-2,3-dihydroxy-3-methylpentanoate (2,3-dihydroxy-3-methylvalerate) into 2-oxo-3-methylpentanoate (2-oxo-3-methylvalerate) and of (2R)-2,3-dihydroxy-3-methylbutanoate (2,3-dihydroxyisovalerate) into 2-oxo-3-methylbutanoate (2-oxoisovalerate), the penultimate precursor to L-isoleucine and L-valine, respectively. This Pseudomonas savastanoi pv. phaseolicola (strain 1448A / Race 6) (Pseudomonas syringae pv. phaseolicola (strain 1448A / Race 6)) protein is Dihydroxy-acid dehydratase.